We begin with the raw amino-acid sequence, 312 residues long: Methionyl-tRNA formyltransferase (312 aa).

111–114 (SLLP) is a (6S)-5,6,7,8-tetrahydrofolate binding site.

The protein belongs to the Fmt family.

The enzyme catalyses L-methionyl-tRNA(fMet) + (6R)-10-formyltetrahydrofolate = N-formyl-L-methionyl-tRNA(fMet) + (6S)-5,6,7,8-tetrahydrofolate + H(+). In terms of biological role, attaches a formyl group to the free amino group of methionyl-tRNA(fMet). The formyl group appears to play a dual role in the initiator identity of N-formylmethionyl-tRNA by promoting its recognition by IF2 and preventing the misappropriation of this tRNA by the elongation apparatus. This chain is Methionyl-tRNA formyltransferase, found in Rhodopseudomonas palustris (strain HaA2).